The chain runs to 127 residues: uncharacterized protein (127 aa).

This is an uncharacterized protein from Bacillus subtilis (strain 168).